Here is a 136-residue protein sequence, read N- to C-terminus: Sec-independent protein translocase protein TatB (136 aa).

Residues 2–22 traverse the membrane as a helical segment; it reads FGSVGWGELLVLLIVGLVVLG. A disordered region spans residues 107–136; it reads VTEPAPTPIVNPELAKPAEPGPTRYDADAT.

It belongs to the TatB family. In terms of assembly, the Tat system comprises two distinct complexes: a TatABC complex, containing multiple copies of TatA, TatB and TatC subunits, and a separate TatA complex, containing only TatA subunits. Substrates initially bind to the TatABC complex, which probably triggers association of the separate TatA complex to form the active translocon.

It is found in the cell membrane. Functionally, part of the twin-arginine translocation (Tat) system that transports large folded proteins containing a characteristic twin-arginine motif in their signal peptide across membranes. Together with TatC, TatB is part of a receptor directly interacting with Tat signal peptides. TatB may form an oligomeric binding site that transiently accommodates folded Tat precursor proteins before their translocation. The chain is Sec-independent protein translocase protein TatB from Mycobacteroides abscessus (strain ATCC 19977 / DSM 44196 / CCUG 20993 / CIP 104536 / JCM 13569 / NCTC 13031 / TMC 1543 / L948) (Mycobacterium abscessus).